A 281-amino-acid chain; its full sequence is N-methyltransferase tcpN (281 aa).

This sequence belongs to the methyltransferase superfamily. LaeA methyltransferase family.

Its pathway is secondary metabolite biosynthesis. N-methyltransferase; part of the gene cluster that mediates the biosynthesis of an unusual class of epipolythiodioxopiperazines (ETPs) lacking the reactive thiol group important for toxicity. Firstly, L-tyrosine is prenylated by tcpD, before undergoing condensation with L-glycine in a reaction catalyzed by the NRPS tcpP leading to the diketopiperazine (DKP) backbone. Afterwards the alpha-carbon of tyrosine is oxidized by the cytochrome P450 tcpC to form a hydroxyl group. However, in contrast other ETP biosynthesis pathways studied so far, tcpC is not able to bishydroxylate the DKP at both alpha-carbon positions, but hydroxylates the alpha-carbon of the tyrosine part and the nitrogen of the glycine part. The next steps involve an alpha,beta-elimination reaction catalyzed by tcpI, a methylation by the methyltransferase tcpN the action of the four enzyme cascade tcpG/K/J/I. Due to a dysfunctional cytochrome P450 monooxygenase tcpC, the pathway leads to the biosynthesis of probable non-toxic metabolites lacking the reactive thiol group. This chain is N-methyltransferase tcpN, found in Claviceps purpurea (strain 20.1) (Ergot fungus).